Reading from the N-terminus, the 386-residue chain is 5-amino-6-(D-ribitylamino)uracil--L-tyrosine 4-hydroxyphenyl transferase (386 aa).

Residues 56–303 (VSYVINRNLN…MAVARLYLGD (248 aa)) form the Radical SAM core domain. Positions 70, 74, and 77 each coordinate [4Fe-4S] cluster.

The protein belongs to the radical SAM superfamily. CofH family. As to quaternary structure, consists of two subunits, CofG and CofH. [4Fe-4S] cluster is required as a cofactor.

It catalyses the reaction 5-amino-6-(D-ribitylamino)uracil + L-tyrosine + S-adenosyl-L-methionine = 5-amino-5-(4-hydroxybenzyl)-6-(D-ribitylimino)-5,6-dihydrouracil + 2-iminoacetate + 5'-deoxyadenosine + L-methionine + H(+). It participates in cofactor biosynthesis; coenzyme F0 biosynthesis. Functionally, catalyzes the radical-mediated synthesis of 5-amino-5-(4-hydroxybenzyl)-6-(D-ribitylimino)-5,6-dihydrouracil from 5-amino-6-(D-ribitylamino)uracil and L-tyrosine. This is 5-amino-6-(D-ribitylamino)uracil--L-tyrosine 4-hydroxyphenyl transferase from Synechococcus elongatus (strain ATCC 33912 / PCC 7942 / FACHB-805) (Anacystis nidulans R2).